Here is a 433-residue protein sequence, read N- to C-terminus: PHO85 cyclin-10 (433 aa).

Over residues 1 to 10 (MDMTKNHTTD) the composition is skewed to basic and acidic residues. 2 disordered regions span residues 1–20 (MDMTKNHTTDTEEFDDGDIR) and 51–81 (LTSEWDQSRSNTPGLAEGKTEKAQPCGTTDS). The span at 51–63 (LTSEWDQSRSNTP) shows a compositional bias: polar residues.

This sequence belongs to the cyclin family. PHO80 subfamily. Forms a cyclin-CDK complex with PHO85. Interacts with GSY2, independent of the presence of PHO85.

Its subcellular location is the cytoplasm. Functionally, cyclin partner of the cyclin-dependent kinase (CDK) PHO85. Together with cyclin PCL8, negatively controls glycogen accumulation under favorable growth conditions. The PCL10-PHO85 cyclin-CDK holoenzyme has glycogen synthase kinase activity and phosphorylates and negatively regulates glycogen synthase GSY2. Also has minor GLC8 kinase activity. In Saccharomyces cerevisiae (strain ATCC 204508 / S288c) (Baker's yeast), this protein is PHO85 cyclin-10 (PCL10).